The following is a 287-amino-acid chain: Co-chaperone protein DjlA (287 aa).

The Periplasmic segment spans residues 1 to 6 (MQIFGK). Residues 7–30 (ILGAFFGFLFGGVFGALFGLFIGH) form a helical membrane-spanning segment. Residues 31–287 (QFDKARRLSQ…DLIKKEKGFK (257 aa)) lie on the Cytoplasmic side of the membrane. The tract at residues 192 to 213 (GGFGGQQHQSHHSSSHGGWQQA) is disordered. The 67-residue stretch at 221 to 287 (DAYKILGIDA…DLIKKEKGFK (67 aa)) folds into the J domain.

Homodimer.

It localises to the cell inner membrane. Functionally, regulatory DnaK co-chaperone. Direct interaction between DnaK and DjlA is needed for the induction of the wcaABCDE operon, involved in the synthesis of a colanic acid polysaccharide capsule, possibly through activation of the RcsB/RcsC phosphotransfer signaling pathway. The colanic acid capsule may help the bacterium survive conditions outside the host. The chain is Co-chaperone protein DjlA from Vibrio vulnificus (strain CMCP6).